The following is a 152-amino-acid chain: Deoxyuridine 5'-triphosphate nucleotidohydrolase (152 aa).

Substrate contacts are provided by residues 71–73 (RSG), Asn-84, 88–90 (LID), and Lys-98.

It belongs to the dUTPase family. The cofactor is Mg(2+).

It carries out the reaction dUTP + H2O = dUMP + diphosphate + H(+). It participates in pyrimidine metabolism; dUMP biosynthesis; dUMP from dCTP (dUTP route): step 2/2. Its function is as follows. This enzyme is involved in nucleotide metabolism: it produces dUMP, the immediate precursor of thymidine nucleotides and it decreases the intracellular concentration of dUTP so that uracil cannot be incorporated into DNA. In Legionella pneumophila (strain Paris), this protein is Deoxyuridine 5'-triphosphate nucleotidohydrolase.